The following is a 249-amino-acid chain: Vacuolar iron transporter 1 (249 aa).

At 1 to 36 the chain is on the cytoplasmic side; the sequence is MADGANDGGNPGAEEQQRLLDQHKEAHFTAGEIVRD. A helical transmembrane segment spans residues 37-57; the sequence is IIIGVSDGLTVPFALAAGLSG. The Vacuolar segment spans residues 58–63; it reads ANASSS. Residues 64 to 84 form a helical membrane-spanning segment; the sequence is IVLTAGIAEVAAGAISMGLGG. The Cytoplasmic segment spans residues 85-170; that stretch reads YLAAKSEADN…PKRALQSAFT (86 aa). The tract at residues 90 to 165 is cytoplasmic metal binding domain (MBD); sequence SEADNYAREL…LEKPDPKRAL (76 aa). The Fe cation site is built by Glu102, Glu105, Glu113, Glu116, Met149, and Glu153. The helical transmembrane segment at 171 to 191 threads the bilayer; sequence IAIAYVLGGLVPLIPYMFIPV. Over 192–194 the chain is Vacuolar; the sequence is ARK. A helical membrane pass occupies residues 195 to 215; the sequence is AVVASVILTLMALLIFGYAKG. The Cytoplasmic portion of the chain corresponds to 216–226; sequence YFTDNKPFKSA. Residues 227-247 form a helical membrane-spanning segment; it reads LQTALIGAIASAAAFGMAKAV. Over 248-249 the chain is Vacuolar; sequence QS.

The protein belongs to the CCC1 family. As to quaternary structure, homodimer. The dimeric interaction is mediated by both the transmembrane domains (TMDs) and the cytoplasmic metal binding domain (MBD).

It is found in the vacuole membrane. It carries out the reaction Fe(2+)(in) = Fe(2+)(out). With respect to regulation, transport of iron ions is inhibited by zinc ions. Vacuolar iron transporter involved in the transfer of iron ions from the cytosol to the vacuole for intracellular iron storage. Can transport cobalt ions from the cytosol to the vacuole. The polypeptide is Vacuolar iron transporter 1 (Eucalyptus grandis (Flooded gum)).